The following is a 547-amino-acid chain: MQTSPSSTAPCADKALDDLLKEVDRRRNFAIISHPDAGKTTLTEKLLLYGGAIQEAGAVKARRSQRSATSDWMAMEQQRGISITSTVLQFDYRGKILNLLDTPGHQDFSEDTYRTLAAADNAVMLIDAAKGLETQTRKLFEVCRLRHLPIFTFINKLDRPSLTPLELMDEIEQELGMNTYAVNYPIGTGDRFRGVYNRLTKTIHLFERTGTHGSKKAADQTMALDDPALESLLGSDVYAEFQDELELIEEAGAEFDLAAVHGGEMTPVFFGSAMNNFGVELFLQAFLQYAAKPEAHDSNRGTIEPTYEEFSGFVFKLQANMDPKHRDRIAFLRVCSGKFEKDMVVKHPRTGKTVRLSRPQKLFAQERESVDIAYAGDVIGLNNPGAFTIGDTVHTGEKIIYPPIPSFSPELFAYLRSTDPSQYKNFKKGVSELQEEGAVQILQSLDESKRDPILAAVGQLQFEVVQYRLQEEYGVETRLEPLGFSLARWVVEGWDALEKAGRLFNTVVVKDRWDAPVLLFKNQWNLEQVAGDCLDLKLSAIAIPPSL.

Positions 24–294 (DRRRNFAIIS…AFLQYAAKPE (271 aa)) constitute a tr-type G domain. GTP is bound by residues 33–40 (SHPDAGKT), 101–105 (DTPGH), and 155–158 (NKLD).

Belongs to the TRAFAC class translation factor GTPase superfamily. Classic translation factor GTPase family. PrfC subfamily.

It localises to the cytoplasm. Its function is as follows. Increases the formation of ribosomal termination complexes and stimulates activities of RF-1 and RF-2. It binds guanine nucleotides and has strong preference for UGA stop codons. It may interact directly with the ribosome. The stimulation of RF-1 and RF-2 is significantly reduced by GTP and GDP, but not by GMP. In Synechocystis sp. (strain ATCC 27184 / PCC 6803 / Kazusa), this protein is Peptide chain release factor 3 (prfC).